Reading from the N-terminus, the 192-residue chain is MPIILGIDPGSRVTGYGVIRQTGRHLEYLGSGAIRTSVDDLPTRLKRIYAGVTEIITQFHPDMFAIEQVFMAKNADSALKLGQARGTAIVAAVNHDLPVFEYAARLVKQTVTGIGSADKIQVQDMVTRMLQLSSKPQADAADALAIAITHAHSIQHSLIVAKQSDQKVGSDKEQILALMKTRYSRGRFRLKG.

Active-site residues include D8, E67, and D139. Mg(2+) contacts are provided by D8, E67, and D139.

Belongs to the RuvC family. Homodimer which binds Holliday junction (HJ) DNA. The HJ becomes 2-fold symmetrical on binding to RuvC with unstacked arms; it has a different conformation from HJ DNA in complex with RuvA. In the full resolvosome a probable DNA-RuvA(4)-RuvB(12)-RuvC(2) complex forms which resolves the HJ. Requires Mg(2+) as cofactor.

The protein resides in the cytoplasm. The enzyme catalyses Endonucleolytic cleavage at a junction such as a reciprocal single-stranded crossover between two homologous DNA duplexes (Holliday junction).. Functionally, the RuvA-RuvB-RuvC complex processes Holliday junction (HJ) DNA during genetic recombination and DNA repair. Endonuclease that resolves HJ intermediates. Cleaves cruciform DNA by making single-stranded nicks across the HJ at symmetrical positions within the homologous arms, yielding a 5'-phosphate and a 3'-hydroxyl group; requires a central core of homology in the junction. The consensus cleavage sequence is 5'-(A/T)TT(C/G)-3'. Cleavage occurs on the 3'-side of the TT dinucleotide at the point of strand exchange. HJ branch migration catalyzed by RuvA-RuvB allows RuvC to scan DNA until it finds its consensus sequence, where it cleaves and resolves the cruciform DNA. In Actinobacillus pleuropneumoniae serotype 5b (strain L20), this protein is Crossover junction endodeoxyribonuclease RuvC.